The sequence spans 204 residues: Large ribosomal subunit protein uL4 (204 aa).

The tract at residues 49–75 is disordered; that stretch reads TKGRSDVSGGGKKPWRQKGRGGARAGS.

This sequence belongs to the universal ribosomal protein uL4 family. Part of the 50S ribosomal subunit.

Functionally, one of the primary rRNA binding proteins, this protein initially binds near the 5'-end of the 23S rRNA. It is important during the early stages of 50S assembly. It makes multiple contacts with different domains of the 23S rRNA in the assembled 50S subunit and ribosome. In terms of biological role, forms part of the polypeptide exit tunnel. This Campylobacter jejuni subsp. doylei (strain ATCC BAA-1458 / RM4099 / 269.97) protein is Large ribosomal subunit protein uL4.